Consider the following 255-residue polypeptide: 5'-nucleotidase SurE (255 aa).

Positions 8, 9, 40, and 95 each coordinate a divalent metal cation.

This sequence belongs to the SurE nucleotidase family. It depends on a divalent metal cation as a cofactor.

The protein resides in the cytoplasm. The enzyme catalyses a ribonucleoside 5'-phosphate + H2O = a ribonucleoside + phosphate. Nucleotidase that shows phosphatase activity on nucleoside 5'-monophosphates. This Solidesulfovibrio magneticus (strain ATCC 700980 / DSM 13731 / RS-1) (Desulfovibrio magneticus) protein is 5'-nucleotidase SurE.